Here is a 69-residue protein sequence, read N- to C-terminus: DNA gyrase inhibitor YacG (69 aa).

Cys7, Cys10, Cys26, and Cys30 together coordinate Zn(2+).

Belongs to the DNA gyrase inhibitor YacG family. In terms of assembly, interacts with GyrB. Requires Zn(2+) as cofactor.

Inhibits all the catalytic activities of DNA gyrase by preventing its interaction with DNA. Acts by binding directly to the C-terminal domain of GyrB, which probably disrupts DNA binding by the gyrase. In Shewanella sp. (strain ANA-3), this protein is DNA gyrase inhibitor YacG.